The chain runs to 257 residues: GTP cyclohydrolase FolE2 (257 aa).

Belongs to the GTP cyclohydrolase IV family.

The catalysed reaction is GTP + H2O = 7,8-dihydroneopterin 3'-triphosphate + formate + H(+). It functions in the pathway cofactor biosynthesis; 7,8-dihydroneopterin triphosphate biosynthesis; 7,8-dihydroneopterin triphosphate from GTP: step 1/1. Functionally, converts GTP to 7,8-dihydroneopterin triphosphate. In Kosmotoga olearia (strain ATCC BAA-1733 / DSM 21960 / TBF 19.5.1), this protein is GTP cyclohydrolase FolE2.